The following is a 394-amino-acid chain: Cobalt-precorrin-5B C(1)-methyltransferase (394 aa).

It belongs to the CbiD family.

The enzyme catalyses Co-precorrin-5B + S-adenosyl-L-methionine = Co-precorrin-6A + S-adenosyl-L-homocysteine. The protein operates within cofactor biosynthesis; adenosylcobalamin biosynthesis; cob(II)yrinate a,c-diamide from sirohydrochlorin (anaerobic route): step 6/10. Its function is as follows. Catalyzes the methylation of C-1 in cobalt-precorrin-5B to form cobalt-precorrin-6A. This Clostridium beijerinckii (strain ATCC 51743 / NCIMB 8052) (Clostridium acetobutylicum) protein is Cobalt-precorrin-5B C(1)-methyltransferase.